We begin with the raw amino-acid sequence, 231 residues long: 5'-methylthioadenosine/S-adenosylhomocysteine nucleosidase (231 aa).

The active-site Proton acceptor is the glutamate 12. Residues glycine 78, methionine 153, and 174–175 (ME) contribute to the substrate site. The active-site Proton donor is the aspartate 198.

It belongs to the PNP/UDP phosphorylase family. MtnN subfamily.

It carries out the reaction S-adenosyl-L-homocysteine + H2O = S-(5-deoxy-D-ribos-5-yl)-L-homocysteine + adenine. The enzyme catalyses S-methyl-5'-thioadenosine + H2O = 5-(methylsulfanyl)-D-ribose + adenine. The catalysed reaction is 5'-deoxyadenosine + H2O = 5-deoxy-D-ribose + adenine. The protein operates within amino-acid biosynthesis; L-methionine biosynthesis via salvage pathway; S-methyl-5-thio-alpha-D-ribose 1-phosphate from S-methyl-5'-thioadenosine (hydrolase route): step 1/2. Its function is as follows. Catalyzes the irreversible cleavage of the glycosidic bond in both 5'-methylthioadenosine (MTA) and S-adenosylhomocysteine (SAH/AdoHcy) to adenine and the corresponding thioribose, 5'-methylthioribose and S-ribosylhomocysteine, respectively. Also cleaves 5'-deoxyadenosine, a toxic by-product of radical S-adenosylmethionine (SAM) enzymes, into 5-deoxyribose and adenine. This is 5'-methylthioadenosine/S-adenosylhomocysteine nucleosidase from Bacillus thuringiensis subsp. konkukian (strain 97-27).